The primary structure comprises 222 residues: Cytochrome b6-f complex iron-sulfur subunit, chloroplastic (222 aa).

The N-terminal 49 residues, 1 to 49 (MASTALSTASNPTQLCRTRASSLCKPVKGLGFGRERIPRNITCMAGSIS), are a transit peptide targeting the chloroplast. A helical transmembrane segment spans residues 66–86 (LLGAISLPTFGMLVPYGSFLV). The Rieske domain maps to 109–205 (VEDWLKTHGP…ADVDDGKVVF (97 aa)). [2Fe-2S] cluster is bound by residues C151, H153, C169, and H172. An intrachain disulfide couples C156 to C171.

It belongs to the Rieske iron-sulfur protein family. The 4 large subunits of the cytochrome b6-f complex are cytochrome b6, subunit IV (17 kDa polypeptide, petD), cytochrome f and the Rieske protein, while the 4 small subunits are petG, petL, petM and petN. The complex functions as a dimer. [2Fe-2S] cluster is required as a cofactor.

It localises to the plastid. It is found in the chloroplast thylakoid membrane. It catalyses the reaction 2 oxidized [plastocyanin] + a plastoquinol + 2 H(+)(in) = 2 reduced [plastocyanin] + a plastoquinone + 4 H(+)(out). In terms of biological role, component of the cytochrome b6-f complex, which mediates electron transfer between photosystem II (PSII) and photosystem I (PSI), cyclic electron flow around PSI, and state transitions. This is Cytochrome b6-f complex iron-sulfur subunit, chloroplastic (petC) from Triticum aestivum (Wheat).